The following is a 337-amino-acid chain: Ribose-phosphate pyrophosphokinase 4 (337 aa).

The residue at position 2 (Ser-2) is an N-acetylserine. Residues Asp-158 and His-160 each coordinate Mg(2+). Residues 241-256 (GCHVVIVDDLVQSGGT) form a binding of phosphoribosylpyrophosphate region.

This sequence belongs to the ribose-phosphate pyrophosphokinase family.

The enzyme catalyses D-ribose 5-phosphate + ATP = 5-phospho-alpha-D-ribose 1-diphosphate + AMP + H(+). The polypeptide is Ribose-phosphate pyrophosphokinase 4 (PRS4) (Arabidopsis thaliana (Mouse-ear cress)).